Here is a 644-residue protein sequence, read N- to C-terminus: Exoribonuclease 2 (644 aa).

The region spanning 189 to 516 (RRDLTALDFV…NHRLLKAIIK (328 aa)) is the RNB domain. Positions 561 to 643 (DTRFAAEIID…ETRSIIARPA (83 aa)) constitute an S1 motif domain.

The protein belongs to the RNR ribonuclease family. RNase II subfamily.

It is found in the cytoplasm. It carries out the reaction Exonucleolytic cleavage in the 3'- to 5'-direction to yield nucleoside 5'-phosphates.. Involved in mRNA degradation. Hydrolyzes single-stranded polyribonucleotides processively in the 3' to 5' direction. This is Exoribonuclease 2 from Klebsiella pneumoniae subsp. pneumoniae (strain ATCC 700721 / MGH 78578).